The primary structure comprises 264 residues: Acyl-[acyl-carrier-protein]--UDP-N-acetylglucosamine O-acyltransferase (264 aa).

It belongs to the transferase hexapeptide repeat family. LpxA subfamily. In terms of assembly, homotrimer.

It localises to the cytoplasm. It catalyses the reaction a (3R)-hydroxyacyl-[ACP] + UDP-N-acetyl-alpha-D-glucosamine = a UDP-3-O-[(3R)-3-hydroxyacyl]-N-acetyl-alpha-D-glucosamine + holo-[ACP]. The protein operates within glycolipid biosynthesis; lipid IV(A) biosynthesis; lipid IV(A) from (3R)-3-hydroxytetradecanoyl-[acyl-carrier-protein] and UDP-N-acetyl-alpha-D-glucosamine: step 1/6. Its function is as follows. Involved in the biosynthesis of lipid A, a phosphorylated glycolipid that anchors the lipopolysaccharide to the outer membrane of the cell. In Rickettsia felis (strain ATCC VR-1525 / URRWXCal2) (Rickettsia azadi), this protein is Acyl-[acyl-carrier-protein]--UDP-N-acetylglucosamine O-acyltransferase.